We begin with the raw amino-acid sequence, 1148 residues long: Protein pianissimo A (1148 aa).

Over residues 1 to 34 (MTSSDSSVNTTSSSFGNISISSPNHSSSTPPLNN) the composition is skewed to low complexity. The tract at residues 1 to 41 (MTSSDSSVNTTSSSFGNISISSPNHSSSTPPLNNGNGNNVS) is disordered. The N-terminal Ras-GEF domain maps to 803-914 (KVSALSLNVL…STSGVYLPPH (112 aa)).

The protein belongs to the RICTOR family. Part of a complex, TORC2, consisting of tor, lst8, piaA and ripA. Additional proteins, such as 14-3-3 and heat-shock proteins, may also belong to the TORC2 complex.

Its subcellular location is the cytoplasm. Its function is as follows. Regulates cell growth, chemotaxis, signal relay and the actin cytoskeleton. Required for chemoattractant receptor and G protein-mediated activation of the 12 transmembrane domain adenylyl cyclase. Functions as a part of protein complex TORC2. TORC2, is presumed to be indirectly negatively modulated by rapamycin and regulates actin polarization. TORC2, but not TORC1, negatively regulates phagocytosis. This protein and dagA protein CRAC, a cytosolic regulator, are both essential for activation of the enzyme adenylyl cyclase. This protein and CRAC do not function redundantly. Both proteins are integral components of the adenylyl cyclase activation pathway. This is Protein pianissimo A (piaA) from Dictyostelium discoideum (Social amoeba).